The following is a 173-amino-acid chain: Protein GrpE (173 aa).

The protein belongs to the GrpE family. In terms of assembly, homodimer.

It is found in the cytoplasm. In terms of biological role, participates actively in the response to hyperosmotic and heat shock by preventing the aggregation of stress-denatured proteins, in association with DnaK and GrpE. It is the nucleotide exchange factor for DnaK and may function as a thermosensor. Unfolded proteins bind initially to DnaJ; upon interaction with the DnaJ-bound protein, DnaK hydrolyzes its bound ATP, resulting in the formation of a stable complex. GrpE releases ADP from DnaK; ATP binding to DnaK triggers the release of the substrate protein, thus completing the reaction cycle. Several rounds of ATP-dependent interactions between DnaJ, DnaK and GrpE are required for fully efficient folding. This is Protein GrpE from Campylobacter fetus subsp. fetus (strain 82-40).